Consider the following 439-residue polypeptide: Ribosomal protein uS12 methylthiotransferase RimO (439 aa).

In terms of domain architecture, MTTase N-terminal spans 4–114 (PKVGFVSLGR…VVRAVHGVAP (111 aa)). The Radical SAM core domain maps to 133–370 (LTPRHYAYLK…MEHQQAISTA (238 aa)). Residues C147, C151, and C154 each coordinate [4Fe-4S] cluster. The TRAM domain maps to 373 to 439 (STRVGREIDV…EYDLWGERIA (67 aa)).

Belongs to the methylthiotransferase family. RimO subfamily. The cofactor is [4Fe-4S] cluster.

Its subcellular location is the cytoplasm. It catalyses the reaction L-aspartate(89)-[ribosomal protein uS12]-hydrogen + (sulfur carrier)-SH + AH2 + 2 S-adenosyl-L-methionine = 3-methylsulfanyl-L-aspartate(89)-[ribosomal protein uS12]-hydrogen + (sulfur carrier)-H + 5'-deoxyadenosine + L-methionine + A + S-adenosyl-L-homocysteine + 2 H(+). Functionally, catalyzes the methylthiolation of an aspartic acid residue of ribosomal protein uS12. This is Ribosomal protein uS12 methylthiotransferase RimO from Bordetella bronchiseptica (strain ATCC BAA-588 / NCTC 13252 / RB50) (Alcaligenes bronchisepticus).